The sequence spans 451 residues: CDP-diacylglycerol--serine O-phosphatidyltransferase PssA (451 aa).

PLD phosphodiesterase domains follow at residues 27–224 (VDFF…ELRD) and 239–451 (SVTP…SRIL). The a CDP-1,2-diacyl-sn-glycerol site is built by Leu56, Tyr57, Arg91, Arg94, Arg96, Ile97, Glu132, Ala133, Val136, His138, Lys140, Gly152, Tyr159, and Arg167. Residue His138 is part of the active site. The active site involves Asp169. A CDP-1,2-diacyl-sn-glycerol contacts are provided by Tyr273, Asp305, Phe306, Ile316, Ile317, Leu320, Leu323, and Tyr324. Residue His357 is part of the active site. A CDP-1,2-diacyl-sn-glycerol contacts are provided by Lys359, Asn374, and Arg378. Glu385 is a catalytic residue. Leu438, Ile447, Ile450, and Leu451 together coordinate a CDP-1,2-diacyl-sn-glycerol.

Belongs to the CDP-alcohol phosphatidyltransferase class-II family. As to quaternary structure, multimeric. Interacts with ACP, YbgC and PlsB, forming altogether a complex at the inner membrane. Monomeric and dimeric; existing in equilibrium, but the monomer probably exhibits preferential membrane association.

The protein resides in the cytoplasm. It is found in the cell inner membrane. It catalyses the reaction a CDP-1,2-diacyl-sn-glycerol + L-serine = a 1,2-diacyl-sn-glycero-3-phospho-L-serine + CMP + H(+). Its pathway is phospholipid metabolism; phosphatidylethanolamine biosynthesis; phosphatidylethanolamine from CDP-diacylglycerol: step 1/2. Catalyzes the conversion of cytidine diphosphate diacylglycerol (CDP-DG) and L-serine into phosphatidylserine. Essential for biosynthesis of phosphatidylethanolamine, one of the major membrane phospholipids. Phosphatidylserine is later converted into phosphatidylethanolamine via the action of phosphatidylserine decarboxylase psd. Associates with the bacterial membrane for its role, which depends on the levels of anionic phospholipids in the membrane. The protein is CDP-diacylglycerol--serine O-phosphatidyltransferase PssA (pssA) of Escherichia coli (strain K12).